The following is a 230-amino-acid chain: 2,3-bisphosphoglycerate-dependent phosphoglycerate mutase (230 aa).

Substrate-binding positions include 8-15, 21-22, R60, 87-90, K98, 114-115, and 183-184; these read RHGESEWN, TG, ERHY, RR, and GN. Residue H9 is the Tele-phosphohistidine intermediate of the active site. The Proton donor/acceptor role is filled by E87.

The protein belongs to the phosphoglycerate mutase family. BPG-dependent PGAM subfamily.

It carries out the reaction (2R)-2-phosphoglycerate = (2R)-3-phosphoglycerate. It functions in the pathway carbohydrate degradation; glycolysis; pyruvate from D-glyceraldehyde 3-phosphate: step 3/5. In terms of biological role, catalyzes the interconversion of 2-phosphoglycerate and 3-phosphoglycerate. The polypeptide is 2,3-bisphosphoglycerate-dependent phosphoglycerate mutase (Streptococcus thermophilus (strain CNRZ 1066)).